The primary structure comprises 711 residues: F-box only protein 34 (711 aa).

4 disordered regions span residues 1 to 36, 249 to 271, 337 to 372, and 494 to 529; these read MHLK…VNDE, SESY…EVGE, DTQV…ASQD, and YSQL…GSAE. The segment covering 10 to 23 has biased composition (basic and acidic residues); sequence QKKEHPPEVSRETQ. Positions 354 to 364 are enriched in basic and acidic residues; sequence RADRCSPKEDQ. The F-box domain maps to 572-624; that stretch reads QQYMAFLPHHIMVKIFRLLPTKSLVALKCTCCYFKFIIEYYNIRPADSRWVRD.

In terms of assembly, directly interacts with SKP1 and CUL1.

Substrate-recognition component of the SCF (SKP1-CUL1-F-box protein)-type E3 ubiquitin ligase complex. This is F-box only protein 34 (FBXO34) from Homo sapiens (Human).